A 107-amino-acid polypeptide reads, in one-letter code: Nucleoid-associated protein Hhal_0231 (107 aa).

2 disordered regions span residues 1-24 (MKGGLGNIMKQAQKMQEDMQKAQE) and 82-107 (VQRESQERMSGMAEGMGLPPGMKLPF). Over residues 15–24 (MQEDMQKAQE) the composition is skewed to basic and acidic residues.

Belongs to the YbaB/EbfC family. In terms of assembly, homodimer.

It localises to the cytoplasm. The protein resides in the nucleoid. Its function is as follows. Binds to DNA and alters its conformation. May be involved in regulation of gene expression, nucleoid organization and DNA protection. In Halorhodospira halophila (strain DSM 244 / SL1) (Ectothiorhodospira halophila (strain DSM 244 / SL1)), this protein is Nucleoid-associated protein Hhal_0231.